The primary structure comprises 102 residues: uncharacterized protein (102 aa).

The next 3 helical transmembrane spans lie at 1–21 (MVPLILLILLFSKFSTFLRPV), 42–62 (SIIDVTYTMHVFYMTIILILV), and 68–88 (SIHAFLGSLCLPSHVLDFSIV).

The protein localises to the membrane. This is an uncharacterized protein from Saccharomyces cerevisiae (strain ATCC 204508 / S288c) (Baker's yeast).